Here is a 619-residue protein sequence, read N- to C-terminus: MGAAFLSSWPWDNLGAYKYVLYAPLVGKAVAGRAWERASPDHWLLLLLVLFGVRALTYQLWSSFSNMLFATRRRRIVRDGVDFGQIDREWDWDNFLILQVHMAAAAFYAFPSLRHLPLWDARGLAVAALLHVAATEPLFYAAHRAFHRGHLFSCYHLQHHSAKVPQPFTAGFATPLEQLVLGALMAVPLAAACAAGHGSVALAFAYVLGFDNLRAMGHCNVEVFPGGLFQSLPVLKYLIYTPTYHTIHHTKEDANFCLFMPLFDLIGGTLDAQSWEMQKKTSAGVDEVPEFVFLAHVVDVMQSLHVPFVLRTFASTPFSVQPFLLPMWPFAFLVMLMMWAWSKTFVISCYRLRGRLHQMWAVPRYGFHYFLPFAKDGINNQIELAILRADKMGAKVVSLAALNKNEALNGGGTLFVNKHPGLRVRVVHGNTLTAAVILNEIPQGTTEVFMTGATSKLGRAIALYLCRKKVRVMMMTLSTERFQKIQREATPEHQQYLVQVTKYRSAQHCKTWIVGKWLSPREQRWAPPGTHFHQFVVPPIIGFRRDCTYGKLAAMRLPKDVQGLGACEYSLERGVVHACHAGGVVHFLEGYTHHEVGAIDVDRIDVVWEAALRHGLRPV.

5 helical membrane passes run 44–64 (LLLL…WSSF), 93–113 (DNFL…FPSL), 123–143 (GLAV…YAAH), 190–210 (AAAC…VLGF), and 322–342 (PFLL…WAWS). Positions 129–269 (LLHVAATEPL…MPLFDLIGGT (141 aa)) constitute a Fatty acid hydroxylase domain.

It belongs to the sterol desaturase family. In terms of assembly, homodimer.

The protein localises to the endoplasmic reticulum membrane. The catalysed reaction is a long-chain fatty aldehyde + 2 NADPH + O2 + H(+) = a long-chain alkane + formate + 2 NADP(+) + H2O. In terms of biological role, aldehyde decarbonylase involved in the conversion of aldehydes to alkanes. Core component of a very-long-chain alkane synthesis complex. The polypeptide is Very-long-chain aldehyde decarbonylase GL1-1 (Oryza sativa subsp. indica (Rice)).